Consider the following 566-residue polypeptide: CTP synthase (566 aa).

The interval 1–282 (MSIKRAQLGG…DAYIIDQLGL (282 aa)) is amidoligase domain. Ser23 provides a ligand contact to CTP. Ser23 is a UTP binding site. ATP-binding positions include 24 to 29 (SLGKGL) and Asp81. 2 residues coordinate Mg(2+): Asp81 and Glu156. CTP is bound by residues 163-165 (DIE), 203-208 (KTKPTQ), and Lys239. Residues 203–208 (KTKPTQ) and Lys239 contribute to the UTP site. The 249-residue stretch at 308–556 (TIGLVGKYID…IGAALDRQKA (249 aa)) folds into the Glutamine amidotransferase type-1 domain. Gly371 is an L-glutamine binding site. Residue Cys398 is the Nucleophile; for glutamine hydrolysis of the active site. L-glutamine-binding positions include 399–402 (LGLQ), Glu422, and Arg482. Catalysis depends on residues His529 and Glu531.

This sequence belongs to the CTP synthase family. In terms of assembly, homotetramer.

The enzyme catalyses UTP + L-glutamine + ATP + H2O = CTP + L-glutamate + ADP + phosphate + 2 H(+). It catalyses the reaction L-glutamine + H2O = L-glutamate + NH4(+). It carries out the reaction UTP + NH4(+) + ATP = CTP + ADP + phosphate + 2 H(+). It functions in the pathway pyrimidine metabolism; CTP biosynthesis via de novo pathway; CTP from UDP: step 2/2. With respect to regulation, allosterically activated by GTP, when glutamine is the substrate; GTP has no effect on the reaction when ammonia is the substrate. The allosteric effector GTP functions by stabilizing the protein conformation that binds the tetrahedral intermediate(s) formed during glutamine hydrolysis. Inhibited by the product CTP, via allosteric rather than competitive inhibition. In terms of biological role, catalyzes the ATP-dependent amination of UTP to CTP with either L-glutamine or ammonia as the source of nitrogen. Regulates intracellular CTP levels through interactions with the four ribonucleotide triphosphates. This Leifsonia xyli subsp. xyli (strain CTCB07) protein is CTP synthase.